The following is a 317-amino-acid chain: tRNA pseudouridine synthase B (317 aa).

Aspartate 47 functions as the Nucleophile in the catalytic mechanism.

This sequence belongs to the pseudouridine synthase TruB family. Type 1 subfamily.

The enzyme catalyses uridine(55) in tRNA = pseudouridine(55) in tRNA. Its function is as follows. Responsible for synthesis of pseudouridine from uracil-55 in the psi GC loop of transfer RNAs. The sequence is that of tRNA pseudouridine synthase B from Shewanella frigidimarina (strain NCIMB 400).